An 81-amino-acid polypeptide reads, in one-letter code: Small ribosomal subunit protein bS16 (81 aa).

Belongs to the bacterial ribosomal protein bS16 family.

This chain is Small ribosomal subunit protein bS16, found in Alkaliphilus oremlandii (strain OhILAs) (Clostridium oremlandii (strain OhILAs)).